We begin with the raw amino-acid sequence, 403 residues long: MHISRLALDHYRSWDHCVLDFEPGINILQGSNGLGKTNIVEAVEVLSTGSSHRTSSSLPLVEKGHPSATVRANVEDAGEQRTYEITIAARGANRARVDGGKSQYMRDIVGWVPSVSFTPEDQRLVSGDPATRRNFLNQAASLLLPRYAQSLQQFTHVAKQRAALLKQLSDGSGIDPEYGRQAVLSGLEVWTGQFIALGVQLTKDRNDVIGLLREPFTRIYASLAGEEEQADLVYEPSFDEVLLFDEPAAEISRHFQRIYPGEVARGQNLIGPQRDDLTLRLNDMPAREFASNGEMWTMALALKMALYEVVSAQRDVKPIVILDDVFAQLDESRRGQILDFARRQDQVLITVAAASDIPQGEAHVIDVAALRAQSQETDGDIAAMAAMLAAGRGAQSQGIEAES.

Position 30-37 (30-37) interacts with ATP; that stretch reads GSNGLGKT.

This sequence belongs to the RecF family.

The protein localises to the cytoplasm. Functionally, the RecF protein is involved in DNA metabolism; it is required for DNA replication and normal SOS inducibility. RecF binds preferentially to single-stranded, linear DNA. It also seems to bind ATP. The protein is DNA replication and repair protein RecF of Bifidobacterium adolescentis (strain ATCC 15703 / DSM 20083 / NCTC 11814 / E194a).